A 385-amino-acid chain; its full sequence is POU domain, class 3, transcription factor 2-B (385 aa).

Disordered stretches follow at residues 106–136 (LVHPAHGNHHGPGAWRSTGSTHLSSMASSNG), 149–209 (NGMI…TPTS), and 351–385 (EKRMTPPGGTIPGAEDVYGASRDTPPHLGVQTSVQ). The span at 122-136 (STGSTHLSSMASSNG) shows a compositional bias: polar residues. Over residues 165–178 (LRDSHDDHHGDHGH) the composition is skewed to basic and acidic residues. A compositionally biased stretch (low complexity) spans 179 to 196 (QQPSQTQQQQQQHSQLQG). The 75-residue stretch at 204-278 (EDTPTSDDLE…LLNKWLEEAD (75 aa)) folds into the POU-specific domain. Positions 296 to 355 (KRKKRTSIEVSVKGALESHFLKCPKPAAQEITSLADSLQLEKEVVRVWFCNRRQKEKRMT) form a DNA-binding region, homeobox.

Belongs to the POU transcription factor family. Class-3 subfamily. Expressed in the developing brain and spinal cord. Also found in a restricted region of the auditory vesicle during development. In the adult, expression is restricted to the brain.

The protein resides in the nucleus. Functionally, transcription factor that may be implicated in patterning of the central nervous system during early development. The sequence is that of POU domain, class 3, transcription factor 2-B (pou3f2-b) from Xenopus laevis (African clawed frog).